Consider the following 289-residue polypeptide: Homeobox protein engrailed-2 (289 aa).

Composition is skewed to basic and acidic residues over residues 1–12 (MEEGGRSPREEA) and 60–83 (EFGR…ESRR). 2 disordered regions span residues 1 to 166 (MEEG…GNQP) and 179 to 206 (SDRP…PRTA). A compositionally biased stretch (gly residues) spans 96–114 (VPGGGGGGGGGSPGRGEGG). The span at 142–160 (LSGAELSVSSDSDSSQAGS) shows a compositional bias: low complexity. The homeobox DNA-binding region spans 200 to 259 (DKRPRTAFTAEQLQRLKAEFQTNRYLTEQRRQSLAQELGLNESQIKIWFQNKRAKIKKAT).

It belongs to the engrailed homeobox family.

It is found in the nucleus. The chain is Homeobox protein engrailed-2 (EN2) from Gallus gallus (Chicken).